The sequence spans 324 residues: Casein kinase I (324 aa).

One can recognise a Protein kinase domain in the interval 9–278; the sequence is YALGKKLGSG…LRRLLKDLFI (270 aa). ATP-binding positions include 15 to 23 and lysine 38; that span reads LGSGSFGDI. The Proton acceptor role is filled by aspartate 128.

Belongs to the protein kinase superfamily. CK1 Ser/Thr protein kinase family. Casein kinase I subfamily. Interacts with rhoptry protein RON3; the interaction is direct. Interacts with CK2alpha; the interaction is direct. Interacts with nucleosome assembly protein NAPL. Interacts with RAB5b. Interacts with host GAPVD1. Interacts with host SNX22. Requires Mg(2+) as cofactor.

Its subcellular location is the cytoplasm. It localises to the cytoplasmic vesicle. The protein resides in the secretory vesicle. It is found in the microneme. The protein localises to the secreted. Its subcellular location is the host cell surface. It carries out the reaction L-seryl-[protein] + ATP = O-phospho-L-seryl-[protein] + ADP + H(+). The catalysed reaction is L-threonyl-[protein] + ATP = O-phospho-L-threonyl-[protein] + ADP + H(+). In terms of biological role, serine/threonine-protein kinase likely to be involved in many cellular processes. Phosphorylates rhoptry protein RON3, nucleosome assembly protein NAPL and DNA/RNA-binding protein ALBA4 in vitro. This chain is Casein kinase I, found in Plasmodium falciparum (isolate Dd2).